Reading from the N-terminus, the 676-residue chain is Probable LRR receptor-like serine/threonine-protein kinase At4g31250 (676 aa).

The signal sequence occupies residues 1 to 26 (MTRDDKFPIVYSLLLIVLLFVSPIYG). The Extracellular portion of the chain corresponds to 27–242 (DGDADALLKF…LLPCRYTRPP (216 aa)). 3 N-linked (GlcNAc...) asparagine glycosylation sites follow: N42, N73, and N83. LRR repeat units follow at residues 98-122 (IRGL…IDGL), 123-146 (VSLA…LFSG), 148-171 (KALL…LGKL), 172-195 (PKLT…KQKN), and 197-218 (VTVN…GLMN). N218 carries an N-linked (GlcNAc...) asparagine glycan. Residues 243-263 (FFTVFLLALTILAVVVLITVF) form a helical membrane-spanning segment. At 264-676 (LSVCILSRRQ…RAMTEEFSLM (413 aa)) the chain is on the cytoplasmic side. The segment covering 319 to 330 (TVQRDSTATSGA) has biased composition (polar residues). A disordered region spans residues 319-347 (TVQRDSTATSGAISVGGLSPDEDKRGDQR). The Protein kinase domain maps to 366–640 (RASAEVLGSG…HEAVDRIEEV (275 aa)). The residue at position 368 (S368) is a Phosphoserine. ATP contacts are provided by residues 372–380 (LGSGGFGSS) and K394. Phosphoserine occurs at positions 446 and 543. A disordered region spans residues 641–676 (DRDAGGGQESVRSSYVTASDGDHRSSRAMTEEFSLM).

This sequence belongs to the protein kinase superfamily. Ser/Thr protein kinase family.

It localises to the membrane. It catalyses the reaction L-seryl-[protein] + ATP = O-phospho-L-seryl-[protein] + ADP + H(+). The catalysed reaction is L-threonyl-[protein] + ATP = O-phospho-L-threonyl-[protein] + ADP + H(+). In Arabidopsis thaliana (Mouse-ear cress), this protein is Probable LRR receptor-like serine/threonine-protein kinase At4g31250.